A 462-amino-acid chain; its full sequence is Alkaline phosphatase 3 (462 aa).

The signal sequence occupies residues 1–32 (MKKFPKKLLPIAVLSSIAFSSLASGSVPEASA). Position 52 (Asp-52) interacts with Mg(2+). A Zn(2+)-binding site is contributed by Asp-52. Residue Ser-101 is the Phosphoserine intermediate of the active site. Residues Thr-154 and Glu-275 each contribute to the Mg(2+) site. Residues Asp-280, His-284, Asp-322, His-323, and His-419 each contribute to the Zn(2+) site.

Belongs to the alkaline phosphatase family. In terms of assembly, monomer. It depends on Mg(2+) as a cofactor. Zn(2+) serves as cofactor.

It carries out the reaction a phosphate monoester + H2O = an alcohol + phosphate. The protein is Alkaline phosphatase 3 (phoB) of Bacillus subtilis (strain 168).